A 152-amino-acid polypeptide reads, in one-letter code: S-protein homolog 4 (152 aa).

Residues 1–23 (MTTMLKTQVHVVVIYLLIQIAFS) form the signal peptide. Asn-71 carries an N-linked (GlcNAc...) asparagine glycan.

This sequence belongs to the plant self-incompatibility (S1) protein family.

Its subcellular location is the secreted. The protein is S-protein homolog 4 of Arabidopsis thaliana (Mouse-ear cress).